Consider the following 265-residue polypeptide: Ribosomal RNA small subunit methyltransferase A (265 aa).

Residues N13, L15, G40, E61, D85, and N103 each contribute to the S-adenosyl-L-methionine site.

This sequence belongs to the class I-like SAM-binding methyltransferase superfamily. rRNA adenine N(6)-methyltransferase family. RsmA subfamily.

The protein resides in the cytoplasm. It carries out the reaction adenosine(1518)/adenosine(1519) in 16S rRNA + 4 S-adenosyl-L-methionine = N(6)-dimethyladenosine(1518)/N(6)-dimethyladenosine(1519) in 16S rRNA + 4 S-adenosyl-L-homocysteine + 4 H(+). In terms of biological role, specifically dimethylates two adjacent adenosines (A1518 and A1519) in the loop of a conserved hairpin near the 3'-end of 16S rRNA in the 30S particle. May play a critical role in biogenesis of 30S subunits. The sequence is that of Ribosomal RNA small subunit methyltransferase A from Aromatoleum aromaticum (strain DSM 19018 / LMG 30748 / EbN1) (Azoarcus sp. (strain EbN1)).